A 318-amino-acid polypeptide reads, in one-letter code: Protein OPG137 (318 aa).

A coiled-coil region spans residues 145-172 (VYDKDKRIQMLEDEVVNLRNQRSNTKSS).

It belongs to the orthopoxvirus OPG137 family. As to quaternary structure, homomultimer. Interacts with OPG160. Post-translationally, phosphorylated by a OPG054-independent mechanism.

The protein resides in the host cytoplasm. Functionally, required for viral crescent formation early during virus morphogenesis. This Vaccinia virus (strain Western Reserve) (VACV) protein is Protein OPG137 (OPG137).